Here is a 121-residue protein sequence, read N- to C-terminus: UPF0212 protein VNG_0879C (121 aa).

Belongs to the UPF0212 family.

In Halobacterium salinarum (strain ATCC 700922 / JCM 11081 / NRC-1) (Halobacterium halobium), this protein is UPF0212 protein VNG_0879C.